Here is a 525-residue protein sequence, read N- to C-terminus: GMP synthase [glutamine-hydrolyzing] (525 aa).

Positions 9 to 207 (RILILDFGSQ…VRDICQCEAL (199 aa)) constitute a Glutamine amidotransferase type-1 domain. The active-site Nucleophile is the cysteine 86. Residues histidine 181 and glutamate 183 contribute to the active site. In terms of domain architecture, GMPS ATP-PPase spans 208-400 (WTPAKIIDDA…LGLPYDMLYR (193 aa)). An ATP-binding site is contributed by 235–241 (SGGVDSS).

In terms of assembly, homodimer.

The catalysed reaction is XMP + L-glutamine + ATP + H2O = GMP + L-glutamate + AMP + diphosphate + 2 H(+). It functions in the pathway purine metabolism; GMP biosynthesis; GMP from XMP (L-Gln route): step 1/1. Its function is as follows. Catalyzes the synthesis of GMP from XMP. This chain is GMP synthase [glutamine-hydrolyzing], found in Klebsiella pneumoniae subsp. pneumoniae (strain ATCC 700721 / MGH 78578).